A 509-amino-acid chain; its full sequence is MREANADADPPDEVRIFDTTLRDGEQTPGVALTPEEKLRIARKLDEIGVDTIEAGFAAASEGELKAIRRIAREELDAEVCSMARMVKGDVDAAVEAEADAVHIVVPTSEVHVKKKLRMDREEVLERAREVVEYARDHGLTVEISTEDGTRTELEYLYEVFDACLEAGAERLGYNDTVGVMAPEGMFLAVKKLRERVGEDVILSVHCHDDFGMATANTVAAVRAGARQVHVTVNGIGERAGNAALEEVVVVLEELYGVDTGIRTERLTELSKLVERLTGVRVPPNKAVVGENAFTHESGIHADGILKDESTYEPIPPEKVGHERRFVLGKHVGTSVIRKKLKQMGVDVDDEQLLEILRRLKRLGDRGKRITEADLRAIAEDVLGRPAERDIEVEDFTTVTGKRTIPTASIVVKIDGTRKEAASTGVGPVDATIKALERALKDQGIDFELVEYRAEALTGGTDAITHVDVKLRDPETGDIVHSGSSREDIVVASLEAFIDGINSLMARKRS.

In terms of domain architecture, Pyruvate carboxyltransferase spans valine 14–threonine 267.

Belongs to the alpha-IPM synthase/homocitrate synthase family. Homodimer.

The catalysed reaction is pyruvate + acetyl-CoA + H2O = (3R)-citramalate + CoA + H(+). Its pathway is amino-acid biosynthesis; L-isoleucine biosynthesis; 2-oxobutanoate from pyruvate: step 1/3. Catalyzes the condensation of pyruvate and acetyl-coenzyme A to form (R)-citramalate. This chain is Putative (R)-citramalate synthase CimA (cimA), found in Methanopyrus kandleri (strain AV19 / DSM 6324 / JCM 9639 / NBRC 100938).